The chain runs to 271 residues: Formamidopyrimidine-DNA glycosylase (271 aa).

Proline 2 functions as the Schiff-base intermediate with DNA in the catalytic mechanism. Catalysis depends on glutamate 3, which acts as the Proton donor. Lysine 57 (proton donor; for beta-elimination activity) is an active-site residue. DNA is bound by residues histidine 90, arginine 109, and arginine 151. The segment at 236–270 (MVYGRAGEACVTCKTKLQEIRQSNRSSVFCPSCQQ) adopts an FPG-type zinc-finger fold. Arginine 260 acts as the Proton donor; for delta-elimination activity in catalysis.

This sequence belongs to the FPG family. As to quaternary structure, monomer. Zn(2+) is required as a cofactor.

It catalyses the reaction Hydrolysis of DNA containing ring-opened 7-methylguanine residues, releasing 2,6-diamino-4-hydroxy-5-(N-methyl)formamidopyrimidine.. The catalysed reaction is 2'-deoxyribonucleotide-(2'-deoxyribose 5'-phosphate)-2'-deoxyribonucleotide-DNA = a 3'-end 2'-deoxyribonucleotide-(2,3-dehydro-2,3-deoxyribose 5'-phosphate)-DNA + a 5'-end 5'-phospho-2'-deoxyribonucleoside-DNA + H(+). Functionally, involved in base excision repair of DNA damaged by oxidation or by mutagenic agents. Acts as a DNA glycosylase that recognizes and removes damaged bases. Has a preference for oxidized purines, such as 7,8-dihydro-8-oxoguanine (8-oxoG). Has AP (apurinic/apyrimidinic) lyase activity and introduces nicks in the DNA strand. Cleaves the DNA backbone by beta-delta elimination to generate a single-strand break at the site of the removed base with both 3'- and 5'-phosphates. This chain is Formamidopyrimidine-DNA glycosylase, found in Colwellia psychrerythraea (strain 34H / ATCC BAA-681) (Vibrio psychroerythus).